A 432-amino-acid polypeptide reads, in one-letter code: Glycosyltransferase 6 (432 aa).

Residues 1–18 (MGKPGGAKTRTAVCLSDG) are Cytoplasmic-facing. Residues 19–39 (VFFLAGAFMSLTLVWSYFSIF) form a helical; Signal-anchor for type II membrane protein membrane-spanning segment. Over 40–432 (SPSFTSLRHD…LPFDYPNEAW (393 aa)) the chain is Lumenal. An N-linked (GlcNAc...) asparagine glycan is attached at asparagine 315.

It belongs to the glycosyltransferase 34 family.

Its subcellular location is the golgi apparatus membrane. Its function is as follows. Probable glycosyltransferase that may be involved in the biosynthesis of xyloglucan. This chain is Glycosyltransferase 6 (GT6), found in Arabidopsis thaliana (Mouse-ear cress).